A 159-amino-acid polypeptide reads, in one-letter code: Succinate dehydrogenase [ubiquinone] cytochrome b small subunit, mitochondrial (159 aa).

Residues 1–36 constitute a mitochondrion transit peptide; the sequence is MATLWRLSVLCGARGGGALVLRTSVVRPAHVSAFLQ. Residues 37-63 are Mitochondrial matrix-facing; sequence DRHTPGWCGVQHIHLSPSHQASSKAAS. Residues 64–85 form a helical membrane-spanning segment; sequence LHWTGERVVSVLLLGLLPAAYL. At 86–90 the chain is on the mitochondrial intermembrane side; the sequence is NPCSA. The chain crosses the membrane as a helical span at residues 91–111; it reads MDYSLAAALTLHGHWGIGQVV. Histidine 102 lines the heme b pocket. The Mitochondrial matrix segment spans residues 112–120; the sequence is TDYVRGDAL. An a ubiquinone-binding site is contributed by tyrosine 114. Residues 121–142 traverse the membrane as a helical segment; that stretch reads QKVAKAGLLALSAFTFAGLCYF. At 143-159 the chain is on the mitochondrial intermembrane side; the sequence is NYHDVGICKAVAMLWKL.

It belongs to the CybS family. In terms of assembly, component of complex II composed of four subunits: the flavoprotein (FP) SDHA, iron-sulfur protein (IP) SDHB, and a cytochrome b560 composed of SDHC and SDHD.

The protein localises to the mitochondrion inner membrane. It participates in carbohydrate metabolism; tricarboxylic acid cycle. In terms of biological role, membrane-anchoring subunit of succinate dehydrogenase (SDH) that is involved in complex II of the mitochondrial electron transport chain and is responsible for transferring electrons from succinate to ubiquinone (coenzyme Q). SDH also oxidizes malate to the non-canonical enol form of oxaloacetate, enol-oxaloacetate. Enol-oxaloacetate, which is a potent inhibitor of the succinate dehydrogenase activity, is further isomerized into keto-oxaloacetate. This chain is Succinate dehydrogenase [ubiquinone] cytochrome b small subunit, mitochondrial (SDHD), found in Sus scrofa (Pig).